Consider the following 82-residue polypeptide: Protein C2 (82 aa).

This Sterkiella nova (Ciliate) protein is Protein C2 (C2).